The primary structure comprises 148 residues: UPF0756 membrane protein YeaL (148 aa).

4 helical membrane-spanning segments follow: residues 14-34 (ALGF…LIIV), 51-71 (LTVG…SGTL), 86-106 (LVAI…ITLM), and 121-141 (VLGV…AGLV).

It belongs to the UPF0756 family.

It localises to the cell membrane. The protein is UPF0756 membrane protein YeaL of Salmonella choleraesuis (strain SC-B67).